A 107-amino-acid polypeptide reads, in one-letter code: Alpha-elapitoxin-Al2a (107 aa).

An N-terminal signal peptide occupies residues 1–21 (MKTLLLTLVVVTIVCLDLGDS). Intrachain disulfides connect cysteine 24-cysteine 41, cysteine 34-cysteine 62, cysteine 47-cysteine 51, cysteine 66-cysteine 77, and cysteine 78-cysteine 83.

It belongs to the three-finger toxin family. Long-chain subfamily. Type II alpha-neurotoxin sub-subfamily. As to expression, expressed by the venom gland.

The protein resides in the secreted. In terms of biological role, binds with high affinity to muscular (alpha-1/CHRNA1) and neuronal (alpha-7/CHRNA7) nicotinic acetylcholine receptor (nAChR) and inhibits acetylcholine from binding to the receptor, thereby impairing neuromuscular and neuronal transmission. The chain is Alpha-elapitoxin-Al2a from Austrelaps labialis (Pygmy copperhead).